A 334-amino-acid chain; its full sequence is TPR repeat-containing protein MJ0798 (334 aa).

7 TPR repeats span residues 102–135 (WKLW…NQNT), 137–168 (LLCK…DRNN), 169–202 (YKAL…NPND), 204–235 (EALE…KPDD), 236–269 (IDLI…NPNV), 273–306 (EQIY…NLYH), and 308–333 (EIYE…YKKL).

This chain is TPR repeat-containing protein MJ0798, found in Methanocaldococcus jannaschii (strain ATCC 43067 / DSM 2661 / JAL-1 / JCM 10045 / NBRC 100440) (Methanococcus jannaschii).